The chain runs to 255 residues: MKFEAIAVENIPLIHTGDDLPSIICKNLELQDRDIVIVASTIVAKAEGKVFRLEDITPGKVALEMASRNGKDARFIQAVLSLSREVLVEKPFMLVTTLAGHTCVNAGIDESNIEDGFLLYPPENSDASASRLGQELETLSGKKLSVIVTDTNGRAFKIGQTGAAIGIYKIKPVKHWIGEKDLFGKVLEVAEEAIADELAGAANLLMGEGAGGTPVVVIRGFDYYCEEETFIKEMYRPEEMDVIKKGLRCLQKRVE.

GTP-binding positions include 11 to 14 (IPLI), 40 to 41 (ST), and K45. D109 is an a divalent metal cation binding site. N112 provides a ligand contact to GTP. The a divalent metal cation site is built by D150, T151, and E208. 206-213 (MGEGAGGT) contributes to the GTP binding site.

It belongs to the CofE family. In terms of assembly, homodimer. Mg(2+) serves as cofactor. Requires Mn(2+) as cofactor. It depends on K(+) as a cofactor.

The catalysed reaction is oxidized coenzyme F420-0 + GTP + L-glutamate = oxidized coenzyme F420-1 + GDP + phosphate + H(+). It carries out the reaction oxidized coenzyme F420-1 + GTP + L-glutamate = oxidized coenzyme F420-2 + GDP + phosphate + H(+). The protein operates within cofactor biosynthesis; coenzyme F420 biosynthesis. Functionally, catalyzes the GTP-dependent successive addition of two or more gamma-linked L-glutamates to the L-lactyl phosphodiester of 7,8-didemethyl-8-hydroxy-5-deazariboflavin (F420-0) to form coenzyme F420-0-glutamyl-glutamate (F420-2) or polyglutamated F420 derivatives. The sequence is that of Coenzyme F420:L-glutamate ligase from Methanosarcina barkeri (strain Fusaro / DSM 804).